The primary structure comprises 325 residues: Glutarate 2-hydroxylase (325 aa).

Residues His160, Asp162, and His292 each contribute to the Fe cation site.

Belongs to the glutarate hydroxylase family. As to quaternary structure, homotetramer. Requires Fe(2+) as cofactor.

The catalysed reaction is glutarate + 2-oxoglutarate + O2 = (S)-2-hydroxyglutarate + succinate + CO2. The protein operates within amino-acid degradation. Acts as an alpha-ketoglutarate-dependent dioxygenase catalyzing hydroxylation of glutarate (GA) to L-2-hydroxyglutarate (L2HG). Functions in a L-lysine degradation pathway that proceeds via cadaverine, glutarate and L-2-hydroxyglutarate. The polypeptide is Glutarate 2-hydroxylase (Escherichia coli O7:K1 (strain IAI39 / ExPEC)).